The primary structure comprises 293 residues: ATP phosphoribosyltransferase (293 aa).

It belongs to the ATP phosphoribosyltransferase family. Long subfamily. Mg(2+) serves as cofactor.

Its subcellular location is the cytoplasm. The catalysed reaction is 1-(5-phospho-beta-D-ribosyl)-ATP + diphosphate = 5-phospho-alpha-D-ribose 1-diphosphate + ATP. It participates in amino-acid biosynthesis; L-histidine biosynthesis; L-histidine from 5-phospho-alpha-D-ribose 1-diphosphate: step 1/9. With respect to regulation, feedback inhibited by histidine. Catalyzes the condensation of ATP and 5-phosphoribose 1-diphosphate to form N'-(5'-phosphoribosyl)-ATP (PR-ATP). Has a crucial role in the pathway because the rate of histidine biosynthesis seems to be controlled primarily by regulation of HisG enzymatic activity. The chain is ATP phosphoribosyltransferase from Nitratidesulfovibrio vulgaris (strain DP4) (Desulfovibrio vulgaris).